Reading from the N-terminus, the 641-residue chain is MLLHCNVSYYTSTFSFISSSLRRQDNADDSQDTVIRRRHNARSISLYIRHNRDLKLNKNPNESQETFVPPPPPPRRDLDGENRSKLLELSLVTRRTPQFPGSIYAQSASDADIASSLPSLRNFLGSDGDDDGESEREMIVKALEIRRKVTKEIIKESLVRKGRFGITYATNVTDRLGDFVDHVMIQAAALKRLPEFSESRFNLRARTVIEDSNFVPLVRWLKHHELSYNRIAKIICMSKGNLDSIRIMIEWLKSIHVKGEFIAVAFLRSGDNILQRNREELNEIVEYLESNGVRRDWMGYVVGRCPELLSFSMEEVKSRVDFFLKMGMNQNDFGTMVYDYPKIIGFFSFQVMEKKINYLKEFGLSTEEVGRLLAYKPHLMGCSIEERWKPLVKYFYYLGIPKEGMKRILVVKPILYCIDLEKTIAPKVRFLQEMGIPNEAIGNMLVKFPSLLTNSLYKKIRPVVIFLLTRAGVTQKDIGKVIAMDPALLGCSIGTKLEPNMRYYISLGIRFYQLGEMIADFPMLLRYNVDNLRPKYRYLRRTMIRPLQDLIEFPRFFSYSLERRIIPRHTIMVENRVNFKLRYMLACTDEEFERRVRDKVERRERFEAGLDSEDSQPSDENISDQEIAFSDEAEEEEDLTE.

Disordered stretches follow at residues 54 to 80 (LKLN…DLDG) and 606 to 641 (FEAG…DLTE). Positions 610–641 (LDSEDSQPSDENISDQEIAFSDEAEEEEDLTE) are enriched in acidic residues.

The protein belongs to the mTERF family.

Its subcellular location is the plastid. It is found in the chloroplast. Its function is as follows. Transcription termination factor involved in processing of plastid transcripts. Essential for embryogenesis. This chain is Transcription termination factor MTERF2, chloroplastic, found in Arabidopsis thaliana (Mouse-ear cress).